The chain runs to 1052 residues: Eukaryotic translation initiation factor 3 subunit A (1052 aa).

The PCI domain maps to 325–505 (IQYAASAVLL…GSLHFNNNIF (181 aa)). 2 coiled-coil regions span residues 568-712 (REHV…RLRE) and 769-882 (EKTA…SAQT). Composition is skewed to basic and acidic residues over residues 570 to 600 (HVSNLSRRDEIEKQKEELEQSRRRRHQEQMQ) and 793 to 874 (KIRL…EQEK). 2 disordered regions span residues 570–606 (HVSNLSRRDEIEKQKEELEQSRRRRHQEQMQKHHQNQ) and 793–1052 (KIRL…DDKN). 2 stretches are compositionally biased toward polar residues: residues 875–887 (LSNLSAQTSQPTW) and 895–906 (APTTAAPSSMRV). Basic and acidic residues-rich tracts occupy residues 942–952 (DRGDRAPRDTG), 960–970 (DRGDRAPRDTG), 979–1013 (RAPRDFSGRSEPSRSGPRDFSGRSEAGRTSGERRA), and 1037–1052 (GSERRVNIPSRGDDKN).

Belongs to the eIF-3 subunit A family. In terms of assembly, component of the eukaryotic translation initiation factor 3 (eIF-3) complex.

It is found in the cytoplasm. RNA-binding component of the eukaryotic translation initiation factor 3 (eIF-3) complex, which is involved in protein synthesis of a specialized repertoire of mRNAs and, together with other initiation factors, stimulates binding of mRNA and methionyl-tRNAi to the 40S ribosome. The eIF-3 complex specifically targets and initiates translation of a subset of mRNAs involved in cell proliferation. In Monosiga brevicollis (Choanoflagellate), this protein is Eukaryotic translation initiation factor 3 subunit A.